The primary structure comprises 288 residues: G1/S-specific cyclin-D2 (288 aa).

The Cyclin N-terminal domain maps to 26–151 (VLQNLLTIEE…VVLGKLKWNL (126 aa)). Residues 264–288 (DQDGSKSEDELDQASTPTDVRDIDL) form a disordered region. Residue serine 270 is modified to Phosphoserine. Threonine 279 carries the phosphothreonine modification.

Belongs to the cyclin family. Cyclin D subfamily. As to quaternary structure, interacts with either CDK4 or CDK6 protein kinase to form a serine/threonine kinase holoenzyme complex. The cyclin subunit imparts substrate specificity to the complex. Phosphorylation at Thr-279 by MAP kinases is required for ubiquitination and degradation by the DCX(AMBRA1) complex. In terms of processing, ubiquitinated by the DCX(AMBRA1) complex during the transition from G1 to S cell phase, leading to its degradation: ubiquitination is dependent on Thr-279 phosphorylation. The DCX(AMBRA1) complex represents the major regulator of CCND2 stability during the G1/S transition. Polyubiquitinated by the SCF(FBXL2) complex, leading to proteasomal degradation.

The protein localises to the nucleus. It localises to the cytoplasm. Its subcellular location is the nucleus membrane. In terms of biological role, regulatory component of the cyclin D2-CDK4 (DC) complex that phosphorylates and inhibits members of the retinoblastoma (RB) protein family including RB1 and regulates the cell-cycle during G(1)/S transition. Phosphorylation of RB1 allows dissociation of the transcription factor E2F from the RB/E2F complex and the subsequent transcription of E2F target genes which are responsible for the progression through the G(1) phase. Hypophosphorylates RB1 in early G(1) phase. Cyclin D-CDK4 complexes are major integrators of various mitogenenic and antimitogenic signals. In Sus scrofa (Pig), this protein is G1/S-specific cyclin-D2 (CCND2).